The following is a 340-amino-acid chain: MEF2 transcription factor homolog (340 aa).

An MADS-box domain is found at 1 to 61 (MGRKKIQITR…NKLFQYASTD (61 aa)). Disordered stretches follow at residues 90–112 (RKEG…TSPV), 193–217 (NQRN…LDFP), 258–283 (LQQR…NGTS), and 312–340 (PNTY…QQLT). Over residues 200–211 (SSTSVAPSSSSS) the composition is skewed to low complexity. The span at 258 to 268 (LQQRPVSQPAP) shows a compositional bias: polar residues. Over residues 269–283 (SISNSSTNGISNGTS) the composition is skewed to low complexity. The span at 318–332 (MEPHSPPEKRPRITT) shows a compositional bias: basic and acidic residues.

This sequence belongs to the MEF2 family. As to quaternary structure, interacts with histone deacetylase hda-4 isoform b.

It is found in the nucleus. Its function is as follows. Transcription regulator. Binds specifically to the MEF2 element, 5'-[TC]TA[AT][AT][AT][AT]TA[AG]-3' in the regulatory elements of target genes, such as chemoreceptors str-1 and srh-234. Involved in transduction of sensory signals, together with egl-4, kin-29 and hda-4; binding to histone deacetylase hda-4 enables negative modulation of chemoreceptor gene expression in chemosensory neurons. In response to starvation, negatively modulates expression of chemoreceptor srh-234 in ADL sensory neurons, acting in concert with basic helix-loop-helix (bHLH) transcription factors. Plays a role in regulating muscle sensitivity to acetylcholine (ACh) and the magnitude of presynaptic ACh release via a retrograde signal, perhaps by indirectly decreasing Ras-related protein Rab-3 activity. The protein is MEF2 transcription factor homolog of Caenorhabditis elegans.